We begin with the raw amino-acid sequence, 180 residues long: UPF0227 protein YcfP (180 aa).

It belongs to the UPF0227 family.

The sequence is that of UPF0227 protein YcfP from Salmonella paratyphi A (strain ATCC 9150 / SARB42).